A 408-amino-acid chain; its full sequence is Aminopeptidase T (408 aa).

Residues E250, E316, E340, H345, H376, and D378 each coordinate a divalent metal cation.

It belongs to the peptidase M29 family. In terms of assembly, homodimer. The cofactor is Co(2+). It depends on Zn(2+) as a cofactor. Mg(2+) is required as a cofactor.

Functionally, metal-dependent exopeptidase. The protein is Aminopeptidase T of Thermus aquaticus.